A 459-amino-acid chain; its full sequence is Putrescine aminotransferase (459 aa).

Residues 150 to 151 (GT) and glutamine 274 contribute to the pyridoxal 5'-phosphate site. At lysine 300 the chain carries N6-(pyridoxal phosphate)lysine. Threonine 332 provides a ligand contact to pyridoxal 5'-phosphate.

This sequence belongs to the class-III pyridoxal-phosphate-dependent aminotransferase family. Putrescine aminotransferase subfamily. It depends on pyridoxal 5'-phosphate as a cofactor.

It carries out the reaction an alkane-alpha,omega-diamine + 2-oxoglutarate = an omega-aminoaldehyde + L-glutamate. It catalyses the reaction putrescine + 2-oxoglutarate = 1-pyrroline + L-glutamate + H2O. The catalysed reaction is cadaverine + 2-oxoglutarate = 5-aminopentanal + L-glutamate. It participates in amine and polyamine degradation; putrescine degradation; 4-aminobutanal from putrescine (transaminase route): step 1/1. Its function is as follows. Catalyzes the aminotransferase reaction from putrescine to 2-oxoglutarate, leading to glutamate and 4-aminobutanal, which spontaneously cyclizes to form 1-pyrroline. This is the first step in one of two pathways for putrescine degradation, where putrescine is converted into 4-aminobutanoate (gamma-aminobutyrate or GABA) via 4-aminobutanal. Also functions as a cadaverine transaminase in a a L-lysine degradation pathway to succinate that proceeds via cadaverine, glutarate and L-2-hydroxyglutarate. The polypeptide is Putrescine aminotransferase (Escherichia coli (strain SMS-3-5 / SECEC)).